A 273-amino-acid polypeptide reads, in one-letter code: N-alpha-acetyltransferase 30 (273 aa).

Disordered stretches follow at residues 1–39 (MADA…HQLN) and 62–85 (QKTR…PNGL). Positions 125 to 273 (RYVRYESELQ…DALRLKLWLR (149 aa)) constitute an N-acetyltransferase domain.

This sequence belongs to the acetyltransferase family. MAK3 subfamily. Component of the N-terminal acetyltransferase C (NatC) complex.

Its subcellular location is the cytoplasm. The protein localises to the nucleus. It catalyses the reaction N-terminal L-methionyl-L-leucyl-[protein] + acetyl-CoA = N-terminal N(alpha)-acetyl-L-methionyl-L-leucyl-[protein] + CoA + H(+). The catalysed reaction is N-terminal L-methionyl-L-isoleucyl-[protein] + acetyl-CoA = N-terminal N(alpha)-acetyl-L-methionyl-L-isoleucyl-[protein] + CoA + H(+). The enzyme catalyses N-terminal L-methionyl-L-phenylalanyl-[protein] + acetyl-CoA = N-terminal N(alpha)-acetyl-L-methionyl-L-phenylalanyl-[protein] + CoA + H(+). It carries out the reaction N-terminal L-methionyl-L-tryptophyl-[protein] + acetyl-CoA = N-terminal N(alpha)-acetyl-L-methionyl-L-tryptophyl-[protein] + CoA + H(+). It catalyses the reaction N-terminal L-methionyl-L-tyrosyl-[protein] + acetyl-CoA = N-terminal N(alpha)-acetyl-L-methionyl-L-tyrosyl-[protein] + CoA + H(+). Catalytic subunit of the N-terminal acetyltransferase C (NatC) complex. Catalyzes acetylation of the N-terminal methionine residues of peptides beginning with Met-Leu-Ala and Met-Leu-Gly. N-terminal acetylation protects proteins from ubiquitination and degradation by the N-end rule pathway. The sequence is that of N-alpha-acetyltransferase 30 (naa30) from Xenopus laevis (African clawed frog).